The chain runs to 321 residues: uncharacterized protein (321 aa).

The Cytoplasmic segment spans residues Met-1–Ala-5. A helical membrane pass occupies residues Gly-6–Met-26. One can recognise an EamA 1 domain in the interval Ile-17 to Asn-144. The Periplasmic portion of the chain corresponds to Lys-27–Pro-35. The chain crosses the membrane as a helical span at residues Pro-36 to Val-56. Residues Lys-57–Arg-70 are Cytoplasmic-facing. Residues Trp-71–Ser-91 form a helical membrane-spanning segment. Over Ser-92–Thr-99 the chain is Periplasmic. The helical transmembrane segment at Ala-100 to Leu-120 threads the bilayer. At Lys-121–Val-130 the chain is on the cytoplasmic side. The helical transmembrane segment at Gly-131 to Phe-151 threads the bilayer. Residues Thr-152–Asp-156 are Periplasmic-facing. The chain crosses the membrane as a helical span at residues Tyr-157–Ala-177. The 124-residue stretch at Thr-169–Ala-292 folds into the EamA 2 domain. At Gln-178 to Ile-190 the chain is on the cytoplasmic side. Residues Leu-191–Ile-211 form a helical membrane-spanning segment. Over Ala-212–His-216 the chain is Periplasmic. A helical membrane pass occupies residues Trp-217–Ala-237. Residues Glu-238 to Ser-249 are Cytoplasmic-facing. Residues Ala-250–Trp-270 form a helical membrane-spanning segment. Residues Pro-271–Met-278 lie on the Periplasmic side of the membrane. The helical transmembrane segment at Leu-279–Ile-299 threads the bilayer. Residues Gly-300–Glu-321 are Cytoplasmic-facing.

It belongs to the EamA transporter family.

It localises to the cell inner membrane. This is an uncharacterized protein from Escherichia coli O157:H7.